A 581-amino-acid polypeptide reads, in one-letter code: Lipoprotein LpqB (581 aa).

Positions 1 to 23 (MRNHVSRYLTALIAVGCAATTAA) are cleaved as a signal peptide. C24 carries N-palmitoyl cysteine lipidation. Residue C24 is the site of S-diacylglycerol cysteine attachment.

Belongs to the LpqB lipoprotein family.

It is found in the cell membrane. The chain is Lipoprotein LpqB from Corynebacterium diphtheriae (strain ATCC 700971 / NCTC 13129 / Biotype gravis).